A 223-amino-acid polypeptide reads, in one-letter code: Large ribosomal subunit protein bL25 (223 aa).

The protein belongs to the bacterial ribosomal protein bL25 family. CTC subfamily. As to quaternary structure, part of the 50S ribosomal subunit; part of the 5S rRNA/L5/L18/L25 subcomplex. Contacts the 5S rRNA. Binds to the 5S rRNA independently of L5 and L18.

This is one of the proteins that binds to the 5S RNA in the ribosome where it forms part of the central protuberance. The sequence is that of Large ribosomal subunit protein bL25 from Albidiferax ferrireducens (strain ATCC BAA-621 / DSM 15236 / T118) (Rhodoferax ferrireducens).